The chain runs to 675 residues: UvrABC system protein B (675 aa).

In terms of domain architecture, Helicase ATP-binding spans E32 to V417. G45–T52 lines the ATP pocket. Residues Y98–I121 carry the Beta-hairpin motif. Residues Q436–I602 enclose the Helicase C-terminal domain. A UVR domain is found at I634 to N669.

This sequence belongs to the UvrB family. Forms a heterotetramer with UvrA during the search for lesions. Interacts with UvrC in an incision complex.

The protein resides in the cytoplasm. In terms of biological role, the UvrABC repair system catalyzes the recognition and processing of DNA lesions. A damage recognition complex composed of 2 UvrA and 2 UvrB subunits scans DNA for abnormalities. Upon binding of the UvrA(2)B(2) complex to a putative damaged site, the DNA wraps around one UvrB monomer. DNA wrap is dependent on ATP binding by UvrB and probably causes local melting of the DNA helix, facilitating insertion of UvrB beta-hairpin between the DNA strands. Then UvrB probes one DNA strand for the presence of a lesion. If a lesion is found the UvrA subunits dissociate and the UvrB-DNA preincision complex is formed. This complex is subsequently bound by UvrC and the second UvrB is released. If no lesion is found, the DNA wraps around the other UvrB subunit that will check the other stand for damage. The sequence is that of UvrABC system protein B from Neisseria gonorrhoeae.